Reading from the N-terminus, the 261-residue chain is Small ribosomal subunit protein uS2 (261 aa).

A disordered region spans residues 223–261 (EGKQGQDDSEDVEKEMADKAAAEDDEEESIEVVVEKSED).

Belongs to the universal ribosomal protein uS2 family.

This is Small ribosomal subunit protein uS2 from Lactobacillus johnsonii (strain CNCM I-12250 / La1 / NCC 533).